Here is a 293-residue protein sequence, read N- to C-terminus: tRNA pseudouridine synthase B (293 aa).

D39 acts as the Nucleophile in catalysis.

Belongs to the pseudouridine synthase TruB family. Type 1 subfamily.

The enzyme catalyses uridine(55) in tRNA = pseudouridine(55) in tRNA. In terms of biological role, responsible for synthesis of pseudouridine from uracil-55 in the psi GC loop of transfer RNAs. In Streptococcus thermophilus (strain CNRZ 1066), this protein is tRNA pseudouridine synthase B.